A 593-amino-acid polypeptide reads, in one-letter code: UvrABC system protein C (593 aa).

The GIY-YIG domain occupies 17–94; that stretch reads MEPGCYLMKD…IKQYQPRYNI (78 aa). Residues 199 to 234 enclose the UVR domain; that stretch reads KTILKSLEERMLTASESLDFERAKEYRDLIQHIQNL.

It belongs to the UvrC family. Interacts with UvrB in an incision complex.

The protein resides in the cytoplasm. Functionally, the UvrABC repair system catalyzes the recognition and processing of DNA lesions. UvrC both incises the 5' and 3' sides of the lesion. The N-terminal half is responsible for the 3' incision and the C-terminal half is responsible for the 5' incision. In Staphylococcus aureus (strain bovine RF122 / ET3-1), this protein is UvrABC system protein C.